Here is a 78-residue protein sequence, read N- to C-terminus: Large ribosomal subunit protein bL28 (78 aa).

Belongs to the bacterial ribosomal protein bL28 family.

This chain is Large ribosomal subunit protein bL28, found in Pectobacterium atrosepticum (strain SCRI 1043 / ATCC BAA-672) (Erwinia carotovora subsp. atroseptica).